The following is a 504-amino-acid chain: Melianol synthase CYP71BQ5 (504 aa).

The chain crosses the membrane as a helical span at residues 2–22; it reads EFRLPSLPVFLSFLLFFLMLV. Cys442 contributes to the heme binding site.

It belongs to the cytochrome P450 family. Heme is required as a cofactor. Mainly expressed in fruits and leaves.

It localises to the membrane. The enzyme catalyses dihydroniloticin + 2 reduced [NADPH--hemoprotein reductase] + 2 O2 = melianol + 2 oxidized [NADPH--hemoprotein reductase] + 3 H2O + 2 H(+). It participates in secondary metabolite biosynthesis; terpenoid biosynthesis. Its function is as follows. Monooxygenase involved in the biosynthesis of limonoids triterpene natural products such as azadirachtin, an antifeedant widely used as bioinsecticide, and possessing many medicinal applications including anti-tumoral, anti-malarial, anti-rheumatic, antibacterial, anti-inflammatory, anti-pyretic and diuretic effects. Catalyzes the conversion of dihydroniloticin to the protolimonoid melianol. This is Melianol synthase CYP71BQ5 from Azadirachta indica (Neem tree).